Consider the following 532-residue polypeptide: Protein PTST homolog 2, chloroplastic (532 aa).

Residues 1 to 71 (MVSINSGPIS…KPRKKSCCSR (71 aa)) constitute a chloroplast transit peptide. Disordered regions lie at residues 165-201 (QLPNCNSPEMDKTLNHGDLDLSSNLSSSTEQVESRND), 256-292 (EVDGSRGSGEYAQSRYQGAKSVSGKPGLSDSPTSETW), 314-347 (SSGLTGVKKDDTKKDSGDSMNGKDRIASSSEDVN), and 367-388 (HSLRSPPDKVVTSKDSETTAGN). Basic and acidic residues predominate over residues 173–183 (EMDKTLNHGDL). Residues 320–339 (VKKDDTKKDSGDSMNGKDRI) show a composition bias toward basic and acidic residues. Residues 389 to 454 (LENLSDDWEY…ASRALRLLRT (66 aa)) adopt a coiled-coil conformation.

In terms of assembly, interacts with PTST3 and SS4. Interacts with MFP1; the interaction is essential for the initiation of starch granules biosynthesis in leaf chloroplasts, for the correct location of the process in the stromal spaces between the thylakoid membranes, and for the association of this protein with the thylakoid membranes. Interacts with PII1/MRC; the interaction is essential for the initiation of starch granules biosynthesis in leaf chloroplasts.

It is found in the plastid. Its subcellular location is the chloroplast. It localises to the chloroplast thylakoid membrane. Functionally, involved in starch granule initiation in leaf chloroplasts. Binds and delivers suitable maltooligosaccharide substrates to starch synthase 4 (SS4). The chain is Protein PTST homolog 2, chloroplastic from Arabidopsis thaliana (Mouse-ear cress).